Here is a 312-residue protein sequence, read N- to C-terminus: MQKIPLIVIAGLTATGKTDVAIELAQLIDGEIVSADSMCVYKYMDIGTAKPTKEQRQIVKHYVIDVVFPNEDYNVALFQKDATKAIDEIYQKGKIPLLVGGTGFYIKSIVDDIEFPEMGDSKQVRQNLYKELEEKGNMYLYEMLKNVDSKAAQSVHPNNVKRVIRYLEIYFLTGKKPTDFLEKVRKKGSKKYNILPLCFVMERSLLKERIDARVEKMFKIGLVDEVKMLLEMGYSKDLKSMQGLGYKQVIPYIEGNITLEEAKEELKLRTKQFAKRQSIWFKYQGDFIYLDVGNLEFKEVVKKCFELCKSVV.

11–18 (GLTATGKT) lines the ATP pocket. Residue 13–18 (TATGKT) participates in substrate binding. The interaction with substrate tRNA stretch occupies residues 36–39 (DSMC).

This sequence belongs to the IPP transferase family. In terms of assembly, monomer. Mg(2+) is required as a cofactor.

The catalysed reaction is adenosine(37) in tRNA + dimethylallyl diphosphate = N(6)-dimethylallyladenosine(37) in tRNA + diphosphate. Catalyzes the transfer of a dimethylallyl group onto the adenine at position 37 in tRNAs that read codons beginning with uridine, leading to the formation of N6-(dimethylallyl)adenosine (i(6)A). This chain is tRNA dimethylallyltransferase, found in Caldicellulosiruptor saccharolyticus (strain ATCC 43494 / DSM 8903 / Tp8T 6331).